A 292-amino-acid chain; its full sequence is UPF0725 protein At4g28920 (292 aa).

The span at 1 to 17 (MSENDSSESDIEMDPEE) shows a compositional bias: acidic residues. A disordered region spans residues 1–24 (MSENDSSESDIEMDPEEEKVYRRQ).

The protein belongs to the UPF0725 (EMB2204) family.

The polypeptide is UPF0725 protein At4g28920 (Arabidopsis thaliana (Mouse-ear cress)).